Here is a 233-residue protein sequence, read N- to C-terminus: ATP synthase subunit a 2 (233 aa).

5 consecutive transmembrane segments (helical) span residues 15–35, 78–98, 107–127, 169–189, and 194–214; these read FVVINATLVYTWLTMALLVIG, YLAFVGTLFLFILTANLLTVV, SLSTTTALAIAVFIAVPIYGI, IMSGNLLAAILLALVPLFVPV, and LGLVFGVIQAYVFAILALVYI.

Belongs to the ATPase A chain family. F-type ATPases have 2 components, CF(1) - the catalytic core - and CF(0) - the membrane proton channel. CF(1) has five subunits: alpha(3), beta(3), gamma(1), delta(1), epsilon(1). CF(0) has four main subunits: a, b, b' and c.

The protein localises to the cellular thylakoid membrane. Key component of the proton channel; it plays a direct role in the translocation of protons across the membrane. The protein is ATP synthase subunit a 2 of Picosynechococcus sp. (strain ATCC 27264 / PCC 7002 / PR-6) (Agmenellum quadruplicatum).